We begin with the raw amino-acid sequence, 191 residues long: Calcium and integrin-binding protein 1 (191 aa).

Gly-2 carries the N-myristoyl glycine lipid modification. EF-hand domains lie at 103–138 (TPDI…LTGE) and 148–183 (EMKQ…SPDF). Ca(2+) contacts are provided by Asp-116, Asp-118, Asp-120, Thr-122, Asp-127, Asp-161, Asp-163, Asp-165, Thr-167, and Glu-172.

In terms of assembly, monomer. Interacts with the heterodimeric integrin alpha-IIb/beta3 (ITGA2B-ITGB3). Interacts with ITGA2B (via cytoplasmic domain); the interaction is direct and calcium-dependent. Interacts with the protein kinases PLK2/SNK and PRKDC (via the region immediately upstream of the kinase domain). Interacts with PLK3; the interaction inhibits PLK3 kinase activity. Interacts with PSEN2. Interacts (via C-terminus) with F8. Interacts with NBR1 (via C-terminus). Interacts with FEZ1 (via C-terminus). Interacts with UBR5 (via C-terminus); the interaction is sensitive to DNA damage, and may target CIB1 for ubiquitin-mediated degradation. Interacts with IFI6; the interaction is direct. Interacts with BCL2. Interacts with ITPR3; the interaction occurs in a calcium dependent manner. Interacts with PTK2/FAK1. Interacts with MAP3K5; the interaction inhibits MAP3K5 activation by phosphorylation, and its subsequent interaction with TRAF2. Interacts (via C-terminal region) with STMN2 (via the N-terminal region); the interaction is direct, occurs in a calcium-dependent manner and attenuates the STMN2-induced neurite outgrowth inhibition. Interacts with SPHK1, the interaction occurs in a calcium-dependent manner. Interacts with ITGA2B (via C-terminal cytoplasmic tail); the interaction occurs upon platelet aggregation and is stabilized/increased in a calcium and magnesium-dependent manner. Interacts with PAK1 (via N-terminal region); the interaction is direct and occurs in a calcium-dependent manner. Interacts with RAC3 (via C-terminal region); the interaction induces their association with the cytoskeleton upon alpha-IIb/beta3 integrin-mediated adhesion. Interacts with ITGA5 and ITGAV. Interacts with MYO1C. Interacts with ITGA2B (via C-terminal cytoplasmic tail region). Interacts (via C-terminal region) with PPP3R1; the interaction increases upon cardiomyocytes hypertrophy. Interacts with CACNA1C; the interaction increases upon cardiomyocytes hypertrophy. Interacts with TAS1R2 (via C-terminus); this interaction is independent of the myristoylation state of CIB1. Interacts and forms a complex with TMC6 and TMC8; the interaction stabilizes each component of the complex.

The protein localises to the membrane. It is found in the cell membrane. It localises to the sarcolemma. The protein resides in the apical cell membrane. Its subcellular location is the cell projection. The protein localises to the ruffle membrane. It is found in the filopodium tip. It localises to the growth cone. The protein resides in the lamellipodium. Its subcellular location is the cytoplasm. The protein localises to the cytoskeleton. It is found in the microtubule organizing center. It localises to the centrosome. The protein resides in the perinuclear region. Its subcellular location is the nucleus. The protein localises to the neuron projection. It is found in the perikaryon. Calcium-binding protein that plays a role in the regulation of numerous cellular processes, such as cell differentiation, cell division, cell proliferation, cell migration, thrombosis, angiogenesis, cardiac hypertrophy and apoptosis. Involved in bone marrow megakaryocyte differentiation by negatively regulating thrombopoietin-mediated signaling pathway. Participates in the endomitotic cell cycle of megakaryocyte, a form of mitosis in which both karyokinesis and cytokinesis are interrupted. Plays a role in integrin signaling by negatively regulating alpha-IIb/beta3 activation in thrombin-stimulated megakaryocytes preventing platelet aggregation. Up-regulates PTK2/FAK1 activity, and is also needed for the recruitment of PTK2/FAK1 to focal adhesions; it thus appears to play an important role in focal adhesion formation. Positively regulates cell migration on fibronectin in a CDC42-dependent manner, the effect being negatively regulated by PAK1. Functions as a negative regulator of stress activated MAP kinase (MAPK) signaling pathways. Down-regulates inositol 1,4,5-trisphosphate receptor-dependent calcium signaling. Involved in sphingosine kinase SPHK1 translocation to the plasma membrane in a N-myristoylation-dependent manner preventing TNF-alpha-induced apoptosis. Regulates serine/threonine-protein kinase PLK3 activity for proper completion of cell division progression. Plays a role in microtubule (MT) dynamics during neuronal development; disrupts the MT depolymerization activity of STMN2 attenuating NGF-induced neurite outgrowth and the MT reorganization at the edge of lamellipodia. Promotes cardiomyocyte hypertrophy via activation of the calcineurin/NFAT signaling pathway. Stimulates calcineurin PPP3R1 activity by mediating its anchoring to the sarcolemma. In ischemia-induced (pathological or adaptive) angiogenesis, stimulates endothelial cell proliferation, migration and microvessel formation by activating the PAK1 and ERK1/ERK2 signaling pathway. Also promotes cancer cell survival and proliferation. May regulate cell cycle and differentiation of spermatogenic germ cells, and/or differentiation of supporting Sertoli cells. Forms a complex with TMC6/EVER1 and TMC8/EVER2 in lymphocytes and keratynocytes where CIB1 stabilizes TMC6 and TMC8 levels and reciprocally. In Bos taurus (Bovine), this protein is Calcium and integrin-binding protein 1 (CIB1).